The sequence spans 510 residues: Glycerol kinase (510 aa).

Thr12 is a binding site for ADP. ATP is bound by residues Thr12, Thr13, and Ser14. Thr12 provides a ligand contact to sn-glycerol 3-phosphate. Arg16 provides a ligand contact to ADP. 3 residues coordinate sn-glycerol 3-phosphate: Arg82, Glu83, and Tyr134. Glycerol-binding residues include Arg82, Glu83, and Tyr134. His230 bears the Phosphohistidine; by HPr mark. Asp244 serves as a coordination point for sn-glycerol 3-phosphate. Glycerol contacts are provided by Asp244 and Gln245. Positions 266 and 309 each coordinate ADP. ATP is bound by residues Thr266, Gly309, Gln313, and Gly410. ADP contacts are provided by Gly410 and Asn414.

It belongs to the FGGY kinase family. As to quaternary structure, homotetramer and homodimer (in equilibrium). The phosphoenolpyruvate-dependent sugar phosphotransferase system (PTS), including enzyme I, and histidine-containing protein (HPr) are required for the phosphorylation, which leads to the activation of the enzyme.

It catalyses the reaction glycerol + ATP = sn-glycerol 3-phosphate + ADP + H(+). It participates in polyol metabolism; glycerol degradation via glycerol kinase pathway; sn-glycerol 3-phosphate from glycerol: step 1/1. Its activity is regulated as follows. Activated by phosphorylation and inhibited by fructose 1,6-bisphosphate (FBP). Functionally, key enzyme in the regulation of glycerol uptake and metabolism. Catalyzes the phosphorylation of glycerol to yield sn-glycerol 3-phosphate. The protein is Glycerol kinase of Bacillus cereus (strain ATCC 10987 / NRS 248).